The following is a 638-amino-acid chain: DEAD-box ATP-dependent RNA helicase 52B (638 aa).

Low complexity-rich tracts occupy residues 1 to 21 and 40 to 67; these read MRSS…AAAA and GQAA…VGQP. The tract at residues 1-129 is disordered; it reads MRSSWADSAA…WDRRDREPDP (129 aa). The segment covering 79 to 112 has biased composition (gly residues); sequence VNGGGGGGGGSVGGSRQGFGAGGRGGGGGGGGGA. Residues 119–128 are compositionally biased toward basic and acidic residues; the sequence is GWDRRDREPD. Residues 169–197 carry the Q motif motif; that stretch reads NTFAEIDLGDALNENIRRCKYVKPTPVQR. A Helicase ATP-binding domain is found at 200 to 384; the sequence is IPISIAGRDL…SDFLADYIFL (185 aa). Residue 213–220 coordinates ATP; the sequence is AQTGSGKT. The DEAD box signature appears at 328 to 331; sequence DEAD. The region spanning 411–562 is the Helicase C-terminal domain; the sequence is YLMDLLHAQR…EVPQWLERYA (152 aa). Residues 565-638 form a disordered region; it reads SSFGGGGGRN…GGQGFSSAWD (74 aa). Over residues 567-583 the composition is skewed to gly residues; sequence FGGGGGRNRRSGGGARF. The span at 584–593 shows a compositional bias: basic and acidic residues; it reads GGRDFRRDRG. Residues 594 to 632 show a composition bias toward gly residues; that stretch reads SGGGGYGGGGGGYGGGGYGGGGGGGGYGGGSSYGGGGQG.

It belongs to the DEAD box helicase family. DDX3/DED1 subfamily.

It carries out the reaction ATP + H2O = ADP + phosphate + H(+). In Oryza sativa subsp. japonica (Rice), this protein is DEAD-box ATP-dependent RNA helicase 52B (PL10B).